A 394-amino-acid polypeptide reads, in one-letter code: Olfactomedin-like protein 3B (394 aa).

The N-terminal stretch at Met1 to Ser18 is a signal peptide. Residues Leu29–Asp94 adopt a coiled-coil conformation. Positions Val132–Lys383 constitute an Olfactomedin-like domain. The cysteines at positions 133 and 310 are disulfide-linked. Asn169, Asn204, and Asn233 each carry an N-linked (GlcNAc...) asparagine glycan.

The protein belongs to the OLFML3 family.

The protein localises to the secreted. Functionally, secreted scaffold protein that plays an essential role in dorsoventral patterning during early development. Stabilizes axial formation by restricting chordin (CHRD) activity on the dorsal side. Acts by facilitating the association between the tolloid proteases and their substrate chordin (CHRD), leading to enhance chordin (CHRD) degradation. The chain is Olfactomedin-like protein 3B (olfml3b) from Danio rerio (Zebrafish).